We begin with the raw amino-acid sequence, 444 residues long: uncharacterized protein (444 aa).

Residues 1 to 72 constitute a chloroplast transit peptide; it reads MGFLTAAIRV…RPMWNVSFLR (72 aa). Positions 77 to 107 are disordered; it reads HSTPARETGDDDISKSENSSSQDGDSCTKLK. Positions 92-101 are enriched in polar residues; sequence SENSSSQDGD. Positions 175 to 272 constitute a CRM domain; that stretch reads EILTPEEHFY…KNYVQPPTEI (98 aa). A coiled-coil region spans residues 292–355; it reads DALRAVRKYI…CLEDEQEEDE (64 aa). 2 disordered regions span residues 344 to 364 and 392 to 426; these read EECL…ATDS and KFPA…PNFD. A compositionally biased stretch (acidic residues) spans 346–357; sequence CLEDEQEEDEAG. Residues 406–426 show a composition bias toward basic and acidic residues; the sequence is DLGKAKSEGEENDDDKSPNFD.

It localises to the plastid. The protein localises to the chloroplast. This is an uncharacterized protein from Arabidopsis thaliana (Mouse-ear cress).